The primary structure comprises 334 residues: Glyceraldehyde-3-phosphate dehydrogenase (334 aa).

NAD(+) contacts are provided by residues 12–13 and glycine 111; that span reads TI. D-glyceraldehyde 3-phosphate is bound at residue 140 to 142; sequence SCN. Cysteine 141 acts as the Nucleophile in catalysis. Arginine 167 contacts NAD(+). 192–193 provides a ligand contact to D-glyceraldehyde 3-phosphate; sequence HG. Glutamine 298 contacts NAD(+).

The protein belongs to the glyceraldehyde-3-phosphate dehydrogenase family. In terms of assembly, homotetramer.

It localises to the cytoplasm. It catalyses the reaction D-glyceraldehyde 3-phosphate + phosphate + NADP(+) = (2R)-3-phospho-glyceroyl phosphate + NADPH + H(+). It carries out the reaction D-glyceraldehyde 3-phosphate + phosphate + NAD(+) = (2R)-3-phospho-glyceroyl phosphate + NADH + H(+). It functions in the pathway carbohydrate degradation; glycolysis; pyruvate from D-glyceraldehyde 3-phosphate: step 1/5. This chain is Glyceraldehyde-3-phosphate dehydrogenase, found in Thermococcus onnurineus (strain NA1).